Reading from the N-terminus, the 123-residue chain is Ragulator complex protein LAMTOR3-A (123 aa).

Belongs to the LAMTOR3 family. As to quaternary structure, part of the Ragulator complex composed of lamtor1, lamtor2, lamtor3, lamtor4 and lamtor5. The Ragulator complex interacts with slc38a9; the probable amino acid sensor. Component of the lysosomal folliculin complex (LFC).

The protein resides in the late endosome membrane. Functionally, as part of the Ragulator complex it is involved in amino acid sensing and activation of mTORC1, a signaling complex promoting cell growth in response to growth factors, energy levels, and amino acids. Activated by amino acids through a mechanism involving the lysosomal V-ATPase, the Ragulator plays a dual role for the small GTPases Rag (RagA/RRAGA, RagB/RRAGB, RagC/RRAGC and/or RagD/RRAGD): it (1) acts as a guanine nucleotide exchange factor (GEF), activating the small GTPases Rag and (2) mediates recruitment of Rag GTPases to the lysosome membrane. Activated Ragulator and Rag GTPases function as a scaffold recruiting mTORC1 to lysosomes where it is in turn activated. The sequence is that of Ragulator complex protein LAMTOR3-A (lamtor3-a) from Xenopus laevis (African clawed frog).